The primary structure comprises 66 residues: DNA-directed RNA polymerase subunit Rpo10 (66 aa).

Cys-7, Cys-10, Cys-44, and Cys-45 together coordinate Zn(2+).

Belongs to the archaeal Rpo10/eukaryotic RPB10 RNA polymerase subunit family. Part of the 13-subunit RNA polymerase complex. Zn(2+) is required as a cofactor.

The protein localises to the cytoplasm. The enzyme catalyses RNA(n) + a ribonucleoside 5'-triphosphate = RNA(n+1) + diphosphate. Functionally, DNA-dependent RNA polymerase (RNAP) catalyzes the transcription of DNA into RNA using the four ribonucleoside triphosphates as substrates. In Sulfolobus acidocaldarius (strain ATCC 33909 / DSM 639 / JCM 8929 / NBRC 15157 / NCIMB 11770), this protein is DNA-directed RNA polymerase subunit Rpo10.